The primary structure comprises 64 residues: Large ribosomal subunit protein bL35 (64 aa).

The protein belongs to the bacterial ribosomal protein bL35 family.

This Shewanella frigidimarina (strain NCIMB 400) protein is Large ribosomal subunit protein bL35.